Consider the following 403-residue polypeptide: Serine/threonine-protein phosphatase 4 regulatory subunit 2-A (403 aa).

Polar residues-rich tracts occupy residues 140 to 149, 156 to 170, and 183 to 196; these read EKNNSTSLNR, PSNSQSYTDRSNVNG, and SLSSPMNTNGLPDS. Positions 140–403 are disordered; sequence EKNNSTSLNR…DAPEEPMEQD (264 aa). The segment covering 197–211 has biased composition (basic and acidic residues); it reads TENKESDLQQKEKSQ. Polar residues-rich tracts occupy residues 212–226 and 371–387; these read SDSAVSDDGSQATTS and ATSSGKSTETLTLSPME. A compositionally biased stretch (acidic residues) spans 388-403; it reads NSEEATDAPEEPMEQD.

Belongs to the PPP4R2 family. Serine/threonine-protein phosphatase 4 (PP4) occurs in different assemblies of the catalytic and one or more regulatory subunits.

Regulatory subunit of serine/threonine-protein phosphatase 4 (PP4). The protein is Serine/threonine-protein phosphatase 4 regulatory subunit 2-A (ppp4r2-a) of Xenopus laevis (African clawed frog).